We begin with the raw amino-acid sequence, 182 residues long: Peptidyl-prolyl cis-trans isomerase H (182 aa).

The PPIase cyclophilin-type domain maps to 15–181 (FFDITIGGEP…LDVVISQCGE (167 aa)).

This sequence belongs to the cyclophilin-type PPIase family. PPIase H subfamily.

The protein localises to the nucleus. It catalyses the reaction [protein]-peptidylproline (omega=180) = [protein]-peptidylproline (omega=0). In terms of biological role, PPIases accelerate the folding of proteins. It catalyzes the cis-trans isomerization of proline imidic peptide bonds in oligopeptides. The protein is Peptidyl-prolyl cis-trans isomerase H (CYP3) of Gibberella zeae (strain ATCC MYA-4620 / CBS 123657 / FGSC 9075 / NRRL 31084 / PH-1) (Wheat head blight fungus).